The sequence spans 216 residues: MQKFTLHKGLVAPMDRENVDTDAIIPKQFLKSIKKTGFGPNLFDEWRYLDKGEPGVPESQRKPNPDFVLNQPRYQGASILLARKNFGCGSSREHAPWALDQYGFRAIIAPSFADIFFNNCFKNGLLPIVLPEATVDQLFNEAAAFPGYQLTVDLERQVVVRPQGEEIPFDVVPFRKYCLLNGFDDIGLTLRHADKIRAFEAARLASKPWLSHTMAA.

This sequence belongs to the LeuD family. LeuD type 1 subfamily. Heterodimer of LeuC and LeuD.

The enzyme catalyses (2R,3S)-3-isopropylmalate = (2S)-2-isopropylmalate. It functions in the pathway amino-acid biosynthesis; L-leucine biosynthesis; L-leucine from 3-methyl-2-oxobutanoate: step 2/4. In terms of biological role, catalyzes the isomerization between 2-isopropylmalate and 3-isopropylmalate, via the formation of 2-isopropylmaleate. The chain is 3-isopropylmalate dehydratase small subunit from Acidovorax ebreus (strain TPSY) (Diaphorobacter sp. (strain TPSY)).